The following is a 227-amino-acid chain: ATP synthase F(0) complex subunit a (227 aa).

Helical transmembrane passes span 14-34 (YLGIPLIAIAIALPWVLFPLP), 69-89 (WALLLASLMVFLITINMLGLL), 98-118 (QLSLNMGLAIPLWLATVIIGL), 132-152 (EGTPLPLIPVLIIIETISLFI), 179-199 (VFVLLPMMPTVAILTATVLFL), and 202-222 (LLEVAVAMIQAYVFVLLLSLY).

This sequence belongs to the ATPase A chain family. As to quaternary structure, component of the ATP synthase complex composed at least of ATP5F1A/subunit alpha, ATP5F1B/subunit beta, ATP5MC1/subunit c (homooctomer), MT-ATP6/subunit a, MT-ATP8/subunit 8, ATP5ME/subunit e, ATP5MF/subunit f, ATP5MG/subunit g, ATP5MK/subunit k, ATP5MJ/subunit j, ATP5F1C/subunit gamma, ATP5F1D/subunit delta, ATP5F1E/subunit epsilon, ATP5PF/subunit F6, ATP5PB/subunit b, ATP5PD/subunit d, ATP5PO/subunit OSCP. ATP synthase complex consists of a soluble F(1) head domain (subunits alpha(3) and beta(3)) - the catalytic core - and a membrane F(0) domain - the membrane proton channel (subunits c, a, 8, e, f, g, k and j). These two domains are linked by a central stalk (subunits gamma, delta, and epsilon) rotating inside the F1 region and a stationary peripheral stalk (subunits F6, b, d, and OSCP). Interacts with DNAJC30; interaction is direct.

The protein resides in the mitochondrion inner membrane. It carries out the reaction H(+)(in) = H(+)(out). Subunit a, of the mitochondrial membrane ATP synthase complex (F(1)F(0) ATP synthase or Complex V) that produces ATP from ADP in the presence of a proton gradient across the membrane which is generated by electron transport complexes of the respiratory chain. ATP synthase complex consist of a soluble F(1) head domain - the catalytic core - and a membrane F(1) domain - the membrane proton channel. These two domains are linked by a central stalk rotating inside the F(1) region and a stationary peripheral stalk. During catalysis, ATP synthesis in the catalytic domain of F(1) is coupled via a rotary mechanism of the central stalk subunits to proton translocation. With the subunit c (ATP5MC1), forms the proton-conducting channel in the F(0) domain, that contains two crucial half-channels (inlet and outlet) that facilitate proton movement from the mitochondrial intermembrane space (IMS) into the matrix. Protons are taken up via the inlet half-channel and released through the outlet half-channel, following a Grotthuss mechanism. This chain is ATP synthase F(0) complex subunit a, found in Formosania lacustris (Oriental stream loach).